The sequence spans 208 residues: Putative dioxygenase RC0543 (208 aa).

Belongs to the intradiol ring-cleavage dioxygenase family.

The polypeptide is Putative dioxygenase RC0543 (Rickettsia conorii (strain ATCC VR-613 / Malish 7)).